The following is a 202-amino-acid chain: Na(+)-translocating NADH-quinone reductase subunit E (202 aa).

The next 6 helical transmembrane spans lie at 11-31 (SVFI…FLAM), 35-55 (INAA…TVPA), 81-101 (FLSF…MEMV), 114-134 (GVFL…LFMV), 144-164 (VVYG…LAGI), and 180-200 (LGIT…FGGI).

It belongs to the NqrDE/RnfAE family. Composed of six subunits; NqrA, NqrB, NqrC, NqrD, NqrE and NqrF.

Its subcellular location is the cell inner membrane. The catalysed reaction is a ubiquinone + n Na(+)(in) + NADH + H(+) = a ubiquinol + n Na(+)(out) + NAD(+). In terms of biological role, NQR complex catalyzes the reduction of ubiquinone-1 to ubiquinol by two successive reactions, coupled with the transport of Na(+) ions from the cytoplasm to the periplasm. NqrA to NqrE are probably involved in the second step, the conversion of ubisemiquinone to ubiquinol. This is Na(+)-translocating NADH-quinone reductase subunit E from Cellvibrio japonicus (strain Ueda107) (Pseudomonas fluorescens subsp. cellulosa).